We begin with the raw amino-acid sequence, 344 residues long: Methionine import ATP-binding protein MetN 1 (344 aa).

Residues isoleucine 2 to isoleucine 241 form the ABC transporter domain. Glycine 38–serine 45 serves as a coordination point for ATP.

Belongs to the ABC transporter superfamily. Methionine importer (TC 3.A.1.24) family. The complex is composed of two ATP-binding proteins (MetN), two transmembrane proteins (MetI) and a solute-binding protein (MetQ).

The protein resides in the cell inner membrane. It carries out the reaction L-methionine(out) + ATP + H2O = L-methionine(in) + ADP + phosphate + H(+). The catalysed reaction is D-methionine(out) + ATP + H2O = D-methionine(in) + ADP + phosphate + H(+). Functionally, part of the ABC transporter complex MetNIQ involved in methionine import. Responsible for energy coupling to the transport system. This is Methionine import ATP-binding protein MetN 1 from Burkholderia orbicola (strain AU 1054).